The primary structure comprises 402 residues: mRNA cap guanine-N(7) methyltransferase (402 aa).

The segment covering 1–11 has biased composition (basic and acidic residues); the sequence is MDHVLNPEEKV. The tract at residues 1-75 is disordered; the sequence is MDHVLNPEEK…PRLEEGHGSL (75 aa). Polar residues predominate over residues 35-50; sequence PKLSASEKSLPGNTKS. A compositionally biased stretch (basic and acidic residues) spans 55–72; sequence KAAEPDSPPKRPRLEEGH. Residues 94 to 401 enclose the mRNA cap 0 methyltransferase domain; the sequence is SRIFHLRNFN…IYLLFAFEKQ (308 aa). 103-104 is an mRNA binding site; it reads NN. S-adenosyl-L-methionine is bound by residues Lys107, Gly131, Asp153, Asp187, Gln210, and Tyr215.

It belongs to the class I-like SAM-binding methyltransferase superfamily. mRNA cap 0 methyltransferase family.

It is found in the nucleus. The enzyme catalyses a 5'-end (5'-triphosphoguanosine)-ribonucleoside in mRNA + S-adenosyl-L-methionine = a 5'-end (N(7)-methyl 5'-triphosphoguanosine)-ribonucleoside in mRNA + S-adenosyl-L-homocysteine. Its function is as follows. Catalytic subunit of the mRNA-capping methyltransferase RNMT:RAMAC complex that methylates the N7 position of the added guanosine to the 5'-cap structure of mRNAs. Binds RNA containing 5'-terminal GpppC. This Xenopus laevis (African clawed frog) protein is mRNA cap guanine-N(7) methyltransferase (rnmt).